We begin with the raw amino-acid sequence, 602 residues long: T-cell surface protein tactile (602 aa).

Positions 1–21 are cleaved as a signal peptide; it reads MGRKWTYCVVYTIIQIQFFRG. Over 22–536 the chain is Extracellular; sequence VWEELFNVGD…IIVNQPSDGM (515 aa). Ig-like V-type domains lie at 24–134 and 138–244; these read EELF…VYNL and PYTQ…STTV. Asparagine 42, asparagine 100, asparagine 107, asparagine 145, asparagine 153, asparagine 163, asparagine 195, asparagine 196, asparagine 258, asparagine 281, asparagine 306, asparagine 330, asparagine 348, asparagine 415, asparagine 436, and asparagine 514 each carry an N-linked (GlcNAc...) asparagine glycan. The cysteines at positions 45 and 118 are disulfide-linked. Cysteines 160 and 228 form a disulfide. The Ig-like C2-type domain maps to 250-355; the sequence is PEILMTVENS…MWNTSSQPIT (106 aa). Cysteine 271 and cysteine 335 are oxidised to a cystine. A disordered region spans residues 402 to 478; the sequence is ENGLTPDATP…PQEPDSPVSW (77 aa). The segment covering 409–433 has biased composition (polar residues); sequence ATPQTSNSSMTTKDGNYLEASSGTD. Low complexity predominate over residues 434-448; sequence AKNSSRAAASSKSGS. A helical transmembrane segment spans residues 537 to 557; it reads SWPVLVAALLFFCTLLFGLGV. The Cytoplasmic segment spans residues 558 to 602; the sequence is RKWYRYQNEIMERPPPFKPPPPPIKYTYIQEPIGCDLCCHEMEVL.

As to quaternary structure, homodimer; disulfide-linked. Interacts with PVR.

Its subcellular location is the membrane. May be involved in adhesive interactions of activated T and NK cells during the late phase of the immune response. Promotes NK cell-target adhesion by interacting with PVR present on target cells. May function at a time after T and NK cells have penetrated the endothelium using integrins and selectins, when they are actively engaging diseased cells and moving within areas of inflammation. This chain is T-cell surface protein tactile (Cd96), found in Mus musculus (Mouse).